We begin with the raw amino-acid sequence, 138 residues long: Basic phospholipase A2 vaspin B chain (138 aa).

Positions 1-16 are cleaved as a signal peptide; sequence MRILWIVAVCLIGVEG. 7 cysteine pairs are disulfide-bonded: cysteine 42–cysteine 131, cysteine 44–cysteine 60, cysteine 59–cysteine 111, cysteine 65–cysteine 138, cysteine 66–cysteine 104, cysteine 73–cysteine 97, and cysteine 91–cysteine 102. Ca(2+)-binding residues include tyrosine 43, glycine 45, and glycine 47. The active site involves histidine 63. Ca(2+) is bound at residue aspartate 64. The active site involves aspartate 105.

This sequence belongs to the phospholipase A2 family. Group II subfamily. D49 sub-subfamily. In terms of assembly, heterodimer of a weakly toxic basic protein having phospholipase A2 activity (B chain (AC Q8JFG1)) and a non-toxic acidic protein functioning as its inhibitor (A chain). Ca(2+) is required as a cofactor. Expressed by the venom gland.

Its subcellular location is the secreted. It carries out the reaction a 1,2-diacyl-sn-glycero-3-phosphocholine + H2O = a 1-acyl-sn-glycero-3-phosphocholine + a fatty acid + H(+). Functionally, heterodimer: postsynaptic neurotoxin. Monomer: snake venom phospholipase A2 (PLA2) that shows postsynaptic neurotoxicity. PLA2 catalyzes the calcium-dependent hydrolysis of the 2-acyl groups in 3-sn-phosphoglycerides. The chain is Basic phospholipase A2 vaspin B chain from Vipera aspis aspis (Aspic viper).